A 391-amino-acid chain; its full sequence is Succinate--CoA ligase [ADP-forming] subunit beta (391 aa).

Residues 9–248 (KDILRKFGVA…ITEEDPFEVE (240 aa)) enclose the ATP-grasp domain. ATP contacts are provided by residues Lys50, 57–59 (GRG), Glu103, Met106, and Glu111. Residues Asn203 and Asp217 each coordinate Mg(2+). Residues Asn268 and 325-327 (GIV) contribute to the substrate site.

The protein belongs to the succinate/malate CoA ligase beta subunit family. As to quaternary structure, heterotetramer of two alpha and two beta subunits. It depends on Mg(2+) as a cofactor.

The catalysed reaction is succinate + ATP + CoA = succinyl-CoA + ADP + phosphate. It catalyses the reaction GTP + succinate + CoA = succinyl-CoA + GDP + phosphate. It functions in the pathway carbohydrate metabolism; tricarboxylic acid cycle; succinate from succinyl-CoA (ligase route): step 1/1. Its function is as follows. Succinyl-CoA synthetase functions in the citric acid cycle (TCA), coupling the hydrolysis of succinyl-CoA to the synthesis of either ATP or GTP and thus represents the only step of substrate-level phosphorylation in the TCA. The beta subunit provides nucleotide specificity of the enzyme and binds the substrate succinate, while the binding sites for coenzyme A and phosphate are found in the alpha subunit. This Chlorobium phaeovibrioides (strain DSM 265 / 1930) (Prosthecochloris vibrioformis (strain DSM 265)) protein is Succinate--CoA ligase [ADP-forming] subunit beta.